The chain runs to 157 residues: Jacalin-related lectin 15 (157 aa).

The Jacalin-type lectin domain maps to 13 to 152 (ADKLEAKGGN…LTSLGAYFAP (140 aa)).

It belongs to the jacalin lectin family. In terms of tissue distribution, expressed in stems, leaves and flowers. Not detected in roots.

Functionally, confers broad resistance to potexviruses. Inhibits virus accumulation at the cellular level. This Arabidopsis thaliana (Mouse-ear cress) protein is Jacalin-related lectin 15 (JAL15).